Reading from the N-terminus, the 432-residue chain is Glutamyl-tRNA reductase (432 aa).

Substrate-binding positions include 55 to 58 (TCNR), serine 114, 119 to 121 (ETQ), and glutamine 125. Cysteine 56 functions as the Nucleophile in the catalytic mechanism. Residue 194–199 (GAGEMI) participates in NADP(+) binding.

This sequence belongs to the glutamyl-tRNA reductase family. In terms of assembly, homodimer.

The enzyme catalyses (S)-4-amino-5-oxopentanoate + tRNA(Glu) + NADP(+) = L-glutamyl-tRNA(Glu) + NADPH + H(+). It functions in the pathway porphyrin-containing compound metabolism; protoporphyrin-IX biosynthesis; 5-aminolevulinate from L-glutamyl-tRNA(Glu): step 1/2. Its function is as follows. Catalyzes the NADPH-dependent reduction of glutamyl-tRNA(Glu) to glutamate 1-semialdehyde (GSA). This chain is Glutamyl-tRNA reductase, found in Burkholderia cenocepacia (strain ATCC BAA-245 / DSM 16553 / LMG 16656 / NCTC 13227 / J2315 / CF5610) (Burkholderia cepacia (strain J2315)).